Here is a 197-residue protein sequence, read N- to C-terminus: Imidazoleglycerol-phosphate dehydratase (197 aa).

Belongs to the imidazoleglycerol-phosphate dehydratase family.

It is found in the cytoplasm. It carries out the reaction D-erythro-1-(imidazol-4-yl)glycerol 3-phosphate = 3-(imidazol-4-yl)-2-oxopropyl phosphate + H2O. Its pathway is amino-acid biosynthesis; L-histidine biosynthesis; L-histidine from 5-phospho-alpha-D-ribose 1-diphosphate: step 6/9. The chain is Imidazoleglycerol-phosphate dehydratase from Rhodopseudomonas palustris (strain ATCC BAA-98 / CGA009).